Consider the following 454-residue polypeptide: NADP-specific glutamate dehydrogenase (454 aa).

Ser-2 is subject to N-acetylserine. The active site involves Lys-114.

This sequence belongs to the Glu/Leu/Phe/Val dehydrogenases family. In terms of assembly, homohexamer.

The catalysed reaction is L-glutamate + NADP(+) + H2O = 2-oxoglutarate + NH4(+) + NADPH + H(+). In Neurospora crassa (strain ATCC 24698 / 74-OR23-1A / CBS 708.71 / DSM 1257 / FGSC 987), this protein is NADP-specific glutamate dehydrogenase (gdh).